The chain runs to 134 residues: MAVFKLRVLTPEKIFFEGDAEQLIAKTTSGYVGILKGHAPYVASIVPSEMKIRSDGSFRSAAISDGIVKVSEDSMVTVLTSAIEWSDEIDVARAERSKARAEKQLKAETSRTEFDLAERQLKRAVNRISVANKK.

Belongs to the ATPase epsilon chain family. In terms of assembly, F-type ATPases have 2 components, CF(1) - the catalytic core - and CF(0) - the membrane proton channel. CF(1) has five subunits: alpha(3), beta(3), gamma(1), delta(1), epsilon(1). CF(0) has three main subunits: a, b and c.

Its subcellular location is the cell membrane. In terms of biological role, produces ATP from ADP in the presence of a proton gradient across the membrane. The protein is ATP synthase epsilon chain of Ruminococcus albus (strain ATCC 27210 / DSM 20455 / JCM 14654 / NCDO 2250 / 7).